A 380-amino-acid polypeptide reads, in one-letter code: PqqA peptide cyclase (380 aa).

The 216-residue stretch at 8 to 223 (VNPPLWLLAE…VADYRQKMAA (216 aa)) folds into the Radical SAM core domain. Positions 22, 26, and 29 each coordinate [4Fe-4S] cluster.

This sequence belongs to the radical SAM superfamily. PqqE family. Interacts with PqqD. The interaction is necessary for activity of PqqE. Requires [4Fe-4S] cluster as cofactor.

The catalysed reaction is [PQQ precursor protein] + S-adenosyl-L-methionine = E-Y cross-linked-[PQQ precursor protein] + 5'-deoxyadenosine + L-methionine + H(+). It functions in the pathway cofactor biosynthesis; pyrroloquinoline quinone biosynthesis. In terms of biological role, catalyzes the cross-linking of a glutamate residue and a tyrosine residue in the PqqA protein as part of the biosynthesis of pyrroloquinoline quinone (PQQ). In Klebsiella pneumoniae (strain 342), this protein is PqqA peptide cyclase.